The following is a 628-amino-acid chain: F-box only protein 21 (628 aa).

The F-box domain occupies serine 28–leucine 84.

Directly interacts with SKP1 and CUL1.

Its function is as follows. Substrate-recognition component of the SCF (SKP1-CUL1-F-box protein)-type E3 ubiquitin ligase complex. The sequence is that of F-box only protein 21 (FBXO21) from Homo sapiens (Human).